Here is a 136-residue protein sequence, read N- to C-terminus: uncharacterized protein (136 aa).

Disordered stretches follow at residues Q23–N44 and D56–R95. Positions S61–E79 are enriched in low complexity. Positions E80–E91 are enriched in acidic residues.

This is an uncharacterized protein from Saccharomyces cerevisiae (strain ATCC 204508 / S288c) (Baker's yeast).